Consider the following 618-residue polypeptide: uncharacterized protein (618 aa).

A signal peptide spans 1–29; sequence MSFLVLPPEVNSALMFAGAGSGPTLAAAA. The interval 598 to 618 is disordered; sequence SGDNSSGGFNAGNDQSGFFDG.

The protein belongs to the mycobacterial PPE family.

This is an uncharacterized protein from Mycobacterium tuberculosis (strain ATCC 25618 / H37Rv).